The chain runs to 162 residues: Large ribosomal subunit protein uL10 (162 aa).

The protein belongs to the universal ribosomal protein uL10 family. In terms of assembly, part of the ribosomal stalk of the 50S ribosomal subunit. The N-terminus interacts with L11 and the large rRNA to form the base of the stalk. The C-terminus forms an elongated spine to which L12 dimers bind in a sequential fashion forming a multimeric L10(L12)X complex.

Its function is as follows. Forms part of the ribosomal stalk, playing a central role in the interaction of the ribosome with GTP-bound translation factors. This Borreliella afzelii (strain PKo) (Borrelia afzelii) protein is Large ribosomal subunit protein uL10.